Consider the following 383-residue polypeptide: 1-deoxy-D-xylulose 5-phosphate reductoisomerase (383 aa).

T10, G11, S12, I13, G36, R37, N38, and N122 together coordinate NADPH. K123 contributes to the 1-deoxy-D-xylulose 5-phosphate binding site. E124 provides a ligand contact to NADPH. Residue D148 participates in Mn(2+) binding. Positions 149, 150, 174, and 197 each coordinate 1-deoxy-D-xylulose 5-phosphate. A Mn(2+)-binding site is contributed by E150. G203 provides a ligand contact to NADPH. Residues S210, N215, K216, and E219 each contribute to the 1-deoxy-D-xylulose 5-phosphate site. Mn(2+) is bound at residue E219.

The protein belongs to the DXR family. It depends on Mg(2+) as a cofactor. The cofactor is Mn(2+).

The catalysed reaction is 2-C-methyl-D-erythritol 4-phosphate + NADP(+) = 1-deoxy-D-xylulose 5-phosphate + NADPH + H(+). It participates in isoprenoid biosynthesis; isopentenyl diphosphate biosynthesis via DXP pathway; isopentenyl diphosphate from 1-deoxy-D-xylulose 5-phosphate: step 1/6. Its function is as follows. Catalyzes the NADPH-dependent rearrangement and reduction of 1-deoxy-D-xylulose-5-phosphate (DXP) to 2-C-methyl-D-erythritol 4-phosphate (MEP). The polypeptide is 1-deoxy-D-xylulose 5-phosphate reductoisomerase (Bacillus subtilis (strain 168)).